Reading from the N-terminus, the 387-residue chain is S-adenosylmethionine synthase (387 aa).

ATP is bound at residue His-17. Asp-19 is a Mg(2+) binding site. K(+) is bound at residue Glu-45. L-methionine is bound by residues Glu-58 and Gln-101. The interval 101–111 is flexible loop; it reads QSADIAMGVDA. Residues 166–168, 231–232, Asp-240, 246–247, Ala-263, and Lys-267 contribute to the ATP site; these read DAK, RF, and RK. Residue Asp-240 coordinates L-methionine. Residue Lys-271 participates in L-methionine binding.

It belongs to the AdoMet synthase family. In terms of assembly, homotetramer; dimer of dimers. Mg(2+) is required as a cofactor. K(+) serves as cofactor.

The protein localises to the cytoplasm. The enzyme catalyses L-methionine + ATP + H2O = S-adenosyl-L-methionine + phosphate + diphosphate. It participates in amino-acid biosynthesis; S-adenosyl-L-methionine biosynthesis; S-adenosyl-L-methionine from L-methionine: step 1/1. Its function is as follows. Catalyzes the formation of S-adenosylmethionine (AdoMet) from methionine and ATP. The overall synthetic reaction is composed of two sequential steps, AdoMet formation and the subsequent tripolyphosphate hydrolysis which occurs prior to release of AdoMet from the enzyme. In Rhodospirillum centenum (strain ATCC 51521 / SW), this protein is S-adenosylmethionine synthase.